Here is an 885-residue protein sequence, read N- to C-terminus: Leucine--tRNA ligase (885 aa).

The 'HIGH' region signature appears at 48 to 58; sequence PYPSGKLHMGH. The short motif at 639–643 is the 'KMSKS' region element; sequence TMSKS. K642 is a binding site for ATP.

The protein belongs to the class-I aminoacyl-tRNA synthetase family.

It is found in the cytoplasm. The enzyme catalyses tRNA(Leu) + L-leucine + ATP = L-leucyl-tRNA(Leu) + AMP + diphosphate. This is Leucine--tRNA ligase from Bordetella parapertussis (strain 12822 / ATCC BAA-587 / NCTC 13253).